The chain runs to 94 residues: MEARDVILRPVVTESSMAAMDDKKYTFDVDVRANKTQVRYAIEEIFGVNVKNVNIMNVRGKLKRQGRYAGYTKKRRKAIVTLTADSKEIKIFED.

Belongs to the universal ribosomal protein uL23 family. Part of the 50S ribosomal subunit. Contacts protein L29, and trigger factor when it is bound to the ribosome.

Functionally, one of the early assembly proteins it binds 23S rRNA. One of the proteins that surrounds the polypeptide exit tunnel on the outside of the ribosome. Forms the main docking site for trigger factor binding to the ribosome. This Latilactobacillus sakei subsp. sakei (strain 23K) (Lactobacillus sakei subsp. sakei) protein is Large ribosomal subunit protein uL23.